Here is a 152-residue protein sequence, read N- to C-terminus: Transcriptional regulator MraZ (152 aa).

2 SpoVT-AbrB domains span residues 5–52 and 81–124; these read ASAI…PIHE and AHEC…DEAA.

The protein belongs to the MraZ family. As to quaternary structure, forms oligomers.

The protein resides in the cytoplasm. It localises to the nucleoid. The protein is Transcriptional regulator MraZ of Shewanella pealeana (strain ATCC 700345 / ANG-SQ1).